The following is a 619-amino-acid chain: MSRMVDTMGDLLTARRHFDRAMTIKNGQGCVAALPEFVAATEADPSMADAWLGRIACGDRDLASLKQLNAHSEWLHRETTRIGRTLAAEVQLGPSIGITVTDASQVGLALSSALTIAGEYAKADALLANRELLDSWRNYQWHQLARAFLMYVTQRWPDVLSTAAEDLPPQAIVMPAVTASICALAAHAAAHLGQGRVALDWLDRVDVIGHSRSSERFGADVLTAAIGPADIPLLVADLAYVRGMVYRQLHEEDKAQIWLSKATINGVLTDAAKEALADPNLRLIVTDERTIASRSDRWDASTAKSRDQLDDDNAAQRRGELLAEGRELLAKQVGLAAVKQAVSALEDQLEVRMMRLEHGLPVEGQTNHMLLVGPPGTGKTTTAEALGKIYAGMGIVRHPEIREVRRSDFCGHYIGESGPKTNELIEKSLGRIIFMDEFYSLIERHQDGTPDMIGMEAVNQLLVQLETHRFDFCFIGAGYEDQVDEFLTVNPGLAGRFNRKLRFESYSPVEIVEIGHRYATPRASQLDDAAREVFLDAVTTIRNYTTPSGQHGIDAMQNGRFARNVIERAEGFRDTRVVAQKRAGQPVSVQDLQIITATDIDAAIRSVCSDNRDMAAIVW.

373–380 (GPPGTGKT) contacts ATP.

It belongs to the CbxX/CfxQ family. As to quaternary structure, part of the ESX-2 / type VII secretion system (T7SS), which is composed of cytosolic and membrane components. Residues 522-619 interact with an artificial EsxB-EsxA heterodimer from the adjacent ESX-1 locus.

It localises to the cytoplasm. Functionally, shows ATPase activity. Could provide energy for export of ESX-2 substrates. This is ESX-2 secretion system protein EccA2 (eccA2) from Mycobacterium tuberculosis (strain ATCC 25618 / H37Rv).